The chain runs to 775 residues: Rab3 GTPase-activating protein catalytic subunit (775 aa).

5 positions are modified to phosphoserine: serine 173, serine 330, serine 373, serine 375, and serine 384. Residues 324 to 351 are disordered; it reads DEGKKTSPSDSMTKAYPADAGKAGGQLG. Residues 386–414 form a disordered region; it reads AEDLRGNGQESTKKGGPKDMAPLKPEGRL. A Phosphoserine modification is found at serine 458.

Belongs to the Rab3-GAP catalytic subunit family. As to quaternary structure, the Rab3 GTPase-activating complex is a heterodimer composed of Rab3gap1 and Rab3gap2. The Rab3 GTPase-activating complex interacts with DMXL2. Interacts with LMAN1.

It localises to the cytoplasm. Its subcellular location is the endoplasmic reticulum. It is found in the golgi apparatus. The protein resides in the cis-Golgi network. Its function is as follows. Catalytic subunit of the Rab3 GTPase-activating (Rab3GAP) complex composed of RAB3GAP1 and RAB3GAP2, which has GTPase-activating protein (GAP) activity towards various Rab3 subfamily members (RAB3A, RAB3B, RAB3C and RAB3D), RAB5A and RAB43, and guanine nucleotide exchange factor (GEF) activity towards RAB18. As part of the Rab3GAP complex, acts as a GAP for Rab3 proteins by converting active RAB3-GTP to the inactive form RAB3-GDP. Rab3 proteins are involved in regulated exocytosis of neurotransmitters and hormones. The Rab3GAP complex, acts as a GEF for RAB18 by promoting the conversion of inactive RAB18-GDP to the active form RAB18-GTP. Recruits and stabilizes RAB18 at the cis-Golgi membrane where RAB18 is most likely activated. Also involved in RAB18 recruitment at the endoplasmic reticulum (ER) membrane where it maintains proper ER structure. Required for normal eye and brain development. May participate in neurodevelopmental processes such as proliferation, migration and differentiation before synapse formation, and non-synaptic vesicular release of neurotransmitters. This chain is Rab3 GTPase-activating protein catalytic subunit, found in Rattus norvegicus (Rat).